The following is a 135-amino-acid chain: MESRHAIREAAFQALFALATNPEADKDAVYAEVLPQDTEVPAYLTTLVEGVLSKQADLDAALTPQLKKGWTLSRLTKPDLIILRLGLYEIRYEEAMPEAAAINEAINLAKRYSDDQSAKFVNGILANFIQATPQA.

Belongs to the NusB family.

Functionally, involved in transcription antitermination. Required for transcription of ribosomal RNA (rRNA) genes. Binds specifically to the boxA antiterminator sequence of the ribosomal RNA (rrn) operons. This Lacticaseibacillus paracasei (strain ATCC 334 / BCRC 17002 / CCUG 31169 / CIP 107868 / KCTC 3260 / NRRL B-441) (Lactobacillus paracasei) protein is Transcription antitermination protein NusB.